Here is a 212-residue protein sequence, read N- to C-terminus: MSSASSKRSVMTLFSNKDDIYCHQVKIVLAEKGVLYENAEVDLQALPEDLMELNPYGTVPTLVDRDLVLFNSRIIMEYLDERFPHPPLMQVYPVSRAKDRLLMLRIEQDWYPTLAKAENGTEKEKTSALKQLKEELLGIAPIFQQMPYFMNEEFGLVDCYVAPLLWKLKHLGVEFTGTGSKAIKAYMERVFTRDSFLQSVGEAAPKNLMDDK.

The GST N-terminal domain maps to 9 to 87 (SVMTLFSNKD…YLDERFPHPP (79 aa)). The GST C-terminal domain maps to 92–212 (YPVSRAKDRL…AAPKNLMDDK (121 aa)).

It belongs to the GST superfamily. HSP26 family.

Functionally, forms an equimolar complex with the RNA polymerase holoenzyme (RNAP) but not with the core enzyme. In Haemophilus influenzae (strain ATCC 51907 / DSM 11121 / KW20 / Rd), this protein is Stringent starvation protein A homolog (sspA).